Reading from the N-terminus, the 553-residue chain is Chaperonin GroEL 1 (553 aa).

Residues threonine 29–proline 32, aspartate 86–threonine 90, glycine 413, asparagine 476–leucine 478, and aspartate 492 each bind ATP. The tract at residues aspartate 520 to proline 543 is disordered. Gly residues predominate over residues alanine 528–proline 543.

It belongs to the chaperonin (HSP60) family. As to quaternary structure, forms a cylinder of 14 subunits composed of two heptameric rings stacked back-to-back. Interacts with the co-chaperonin GroES.

The protein localises to the cytoplasm. It carries out the reaction ATP + H2O + a folded polypeptide = ADP + phosphate + an unfolded polypeptide.. In terms of biological role, together with its co-chaperonin GroES, plays an essential role in assisting protein folding. The GroEL-GroES system forms a nano-cage that allows encapsulation of the non-native substrate proteins and provides a physical environment optimized to promote and accelerate protein folding. The polypeptide is Chaperonin GroEL 1 (Synechococcus sp. (strain CC9311)).